The chain runs to 1049 residues: Protein phosphatase Slingshot homolog 1 (1049 aa).

A compositionally biased stretch (polar residues) spans 1-12 (MALVTLQRSPTP). The disordered stretch occupies residues 1 to 28 (MALVTLQRSPTPSAASSSASNSELEAGS). Ala2 carries the post-translational modification N-acetylalanine. Residues 13–25 (SAASSSASNSELE) show a composition bias toward low complexity. A phosphoserine mark is found at Ser37 and Ser57. The DEK-C domain occupies 249-304 (ERTERLIKAKLRSIMMSQDLENVTSKEIRNELEKQMNCNLKELKEFIDNEMLLILG). The Tyrosine-protein phosphatase domain occupies 308-449 (KPSLIFDHLY…LSEYEGILDA (142 aa)). Catalysis depends on Cys393, which acts as the Phosphocysteine intermediate. Residues 456–499 (KLWRQQTDSSLQQPVDDPAGPGDFLPETPDGTPESQLPFLDDAA) form a disordered region. The segment covering 458–468 (WRQQTDSSLQQ) has biased composition (polar residues). A Phosphoserine modification is found at Ser515. 4 disordered regions span residues 544–603 (AAPP…RWGQ), 693–787 (HLAS…KPAK), 825–899 (HTKE…KSPP), and 923–955 (PTSSSMSSNLTRSSSSDSIHSVRGKPGLVKQRT). The segment covering 564–573 (CEKDVKKKLE) has biased composition (basic and acidic residues). Phosphoserine is present on Ser576. The segment covering 731–742 (GAALEPPASLLE) has biased composition (low complexity). Residues 772 to 787 (VIKEESSPKKDMKPAK) are compositionally biased toward basic and acidic residues. Ser897 is subject to Phosphoserine. The segment at 897–1049 (SPPPFFYRLD…LKSPSWMSKS (153 aa)) is interaction with YWHAG. Low complexity predominate over residues 925–943 (SSSMSSNLTRSSSSDSIHS). At Ser978 the chain carries Phosphoserine. A disordered region spans residues 989–1049 (TEDLSSEADP…LKSPSWMSKS (61 aa)). Residues 1001–1013 (VADSQDTTLSESS) are compositionally biased toward polar residues.

This sequence belongs to the protein-tyrosine phosphatase family. As to quaternary structure, interacts with actin and this stimulates phosphatase activity. Also interacts with LIMK1 and with the 14-3-3 proteins YWHAB, YWHAG, YWHAQ, and YWHAZ. Interaction with 14-3-3 proteins inhibits phosphatase activity and also blocks recruitment to lamellipodia and stimulation by actin. Phosphorylated. Inhibitory phosphorylation by PAK4 promotes binding to YWHAZ. Phosphorylation at Ser-978 is decreased by stimuli which promote actin reorganization and lamellipodia formation. Can be dephosphorylated and activated by PPP3CA/calcineurin A. Phosphorylation decreases immediately prior to telophase.

It is found in the cytoplasm. It localises to the cytoskeleton. Its subcellular location is the cell projection. The protein resides in the lamellipodium. The protein localises to the cleavage furrow. It is found in the midbody. It catalyses the reaction O-phospho-L-tyrosyl-[protein] + H2O = L-tyrosyl-[protein] + phosphate. The enzyme catalyses O-phospho-L-seryl-[protein] + H2O = L-seryl-[protein] + phosphate. The catalysed reaction is O-phospho-L-threonyl-[protein] + H2O = L-threonyl-[protein] + phosphate. Protein phosphatase which regulates actin filament dynamics. Dephosphorylates and activates the actin binding/depolymerizing factor cofilin, which subsequently binds to actin filaments and stimulates their disassembly. Inhibitory phosphorylation of cofilin is mediated by LIMK1, which may also be dephosphorylated and inactivated by this protein. The polypeptide is Protein phosphatase Slingshot homolog 1 (Homo sapiens (Human)).